We begin with the raw amino-acid sequence, 5386 residues long: MSSATSPCEMAHKNRLNQTLSILNGQPLLLDGPDLLHQLVPRLHHDANAIDFLEHGSKRRKFSYTTLHSLSDAFAARITEILGKLESASSIIPVFLPQSPELYVVLLAILKAGKAFCPLNLDTPTERLKFILDDISADIIITFESYSEHIRTATNIHVVSANRELSGCHDTFHHHSPHLSPDNLAYVLYTSGSTGLPKAVSVSHRAVTQSLLAHDPHIPAFSRFLQFAAPTFDVSIFEIFFPWFRGKTLVGCTRTQMLDDLPGTIASLDVDAAELTPTVVSSLLSGRSSVPGLKLLLTIGEMLTQPVIDEFGGDATKESILWAMYGPTEAAIHCTIWPQFSTSDSTNTIGHPLDTVSAFILASSTGLHTSPIDILPIGQAGELAIGGPQVAKEYLHRPDLTRASFVEHPYYGRLYRTGDRARINEQGLLECLGRVVAGQVKLRGQRIELGEIEQAIMKTRGCRAVTAMVIQDNLVAFCSGRDGMSRGAVLTTCKHWLPASMIPSDVFVIDVMPQLPSGKVDRKSLEKAYLHSHPNGSSSSLAISPKDPIGHSVWSVVSHHTTQNIGLETNLTSIGIDSLKSIRIASALRRKGYSLGAIEVLSAATLADLIEVCRESKPVDFSSQDKETKPGAFIDTKNLQLNGWRHNVALILPCTPLQEAMLAETRSKPTAYCNWIEVELSVAYTYEQIQDALLFLAQENEILRTGFCIDSQHTTVFSQVIWKELSLSQIQKVASFSNQYSMQSDHDFLRPFGVQIKTHCKLPRLLFQIHHALYDGWSLDLLLRDLDHCLRGKQDLKRPSFREVVRYLDDDRRLNKTQNSTNYWKSLLGDYIPTTLPNYHGKLVHNASIHRFFGQSSVSRHNLFECAHHSAINPQVYFQAATAFVLSLYTGSSDVVLGNVTSGRTIPVAGIEDIIGPCIASLPFRIDFADTYCVRDVLKRTQSTNRDSLRYSQLPLREIARAVNVKPGARLFETLFVWQQSMVEDEDDNASLIAKVVDSADELEFRITLEFEPVGDNILFRSTFDAATVSEHQIQYLFRQIDEVVEMFMVDADRHVSAINQCFTTPSLSIANPTPLEQRFDHGPSHAVEKWAATDPHRTAIIFGHEVNGSIKVKDTMTYSMLNSRANQLARLLAEHGVTNDQLVCIIMEKSVNLYTCILAVLKLGCGYLPLVPDTPIDRVKTILNDAQIAVCMSELSLSATLRSHLSVDIIDFDLAALSDYCDRNLEIPYNGQHLAYAVFTSGSTGTPKGVLVTQDNLMSNLHYLSTIYPFSADSRLLQACSQAFDVSVFEIFFTWYVGICLCSATKEHLFRDFEAAIDQLKVTHLSLTPTVAALVDPKNVPKVEFLVTAGEAVTEHVRRKWAGRGLYQGYGPSETTNICTVRVAVTPDDLINNIGSPFANTSAFVLDPESQDILPRGAVGELCFGGSQVFRGYLNRPELNAQKIIQHPTYGRIYRSGDMGILLPDDSILSTGRTDDQVKIRGQRVELGEVTSVILDHGAVWDCVTLALEQSTNSKTLVSFWVPREDSSSRVESLEPSKFTTTISELFDLLSRRVPSYMVPSHLIPISCLPMTPQAKIDKRFLQRLFSSCEEHTLNNATNSNSITETEEGELLSQWERDVSQLLIRMLATSSDKLKRTSSFFNLGIDSVSAIRFCSELRKAGLGDYSVSEVLKHPSIASLASLKKLQSSTTTTTTTMDKTLSVDASHIFTTNQLERIRSTVDMNGVRATKILPCTPLQEAMISSGLSSPGQAYCNVMVFDVKGDLQQLQRCWKTVIQRHEIFRTSFVATDNPLYSFAQVIVEGYGMGWHEDSIDSGLQLRVSKILFDLMEANKPPVYFSLNREEDSAKLLFCCHHALYDGIAMSTLLAEVQELYHGRQLLPPVSYDVYLKRMLEQNLDEADKYWSALLEGFEPTSFPSLTGKRVREYEAFTSSSRRLSMSLDSVRNSCQNSSVSLLSVVHAAWAKLLHFYTHESDICFGNIVSGRSFPGEHLERLVAPCFNTLPVRVDFDFGKSNRALVDLMHNQSIESLAYQLSPLRRIQKTTLKDGGRLFDSLVILQQPNVPLDSSIWRLEQDSGDMDIPVVCEVVQDQSEDALRLLMHYNNSLISETEASIVMETFDAALSSLIKFPDALSADTDMFPSNLWANYNTNFKRLESDSKFLHSGFERTALLHPDRIALDFWHSQGKKTTWSFEQLNREANQIAHALIRAGAWPDQVIPIHISKSPIYYASILGVLKSGAAFAPVHPDLPEARKQLMFKDLKPKIILCDDGSLLPEDLPDVTVLITQSMSSDDVSNPIIEDLKDTNLAYCLFTSGSTGVPKAVSMEHCAPIQTIESSRTIIPWNPQSRLLQYAAVTFDMCYYDCFLSWTFGFALCAAEQSDLLNDLSGVIKTLEADLLDLTPSVAETLKRADVPNVKWLYCIGEAMSSSVVKEWEGACVNSYGPTEAAFCTTITPLSKDESTSIIGKPFPTTSFAVFSEGSQTPLPALSIGELYIGGAQLARGYWGRANLTNDRFVSRCGQRFYKSGDMVRMLSDGNFEFMGRLDDQVKIRGLRVELGEINSILAELDPDLLSVTTQILLKGESSKEQLVSFMVLRQSIQESDIPTLQRKLKKLASARLPSYMVPQFFLVVDEIPKSMAGKIDKKALKHQWSKTESEVRNILAHISKTPTENISPLTSIYQLGLDSISAVQIASALRSQGYTIKATDVLKHTTCNDLAEHLDQISTSEAPESSPFDFHGFESRHRMQILRDHGIQDGNVAAVRPCTPLQNGMVSQFLAKEGAVYMNYLRLQLEPKVDLEKLKAAWSSTMERHSLLRTGFAHVNDPLFPFAMIEYTQVSVTLPWSAIREQKKSQSSNAWLQRIRAQSLKELYVPPWALRFVERNDQSFLDLAIFHALFDAQSLQNIFTDVTAFYKGLSLPPVPSLNEVVSHVIQSYKQDNSSGKEFWVELGKTANPSRFPNLAPLKCDPKPPIVCTRRSAKSLIDLENGCRQANTTMPAVGMASWLSLLSSYTGESSVTCGVVLSGRSSDATAHANFPCINTVPLAFTVANDTTKMLESITVLNAGIQEHQFKPLKEIQALMGFPNESLFDSIFAYQKLANNKDTSDLWTVVDENATIEYPVSIELEPKEERLEYRLTYFPHIIPREQASLILAQLDHLMESLIFHSQIPLAKTDYSQHLYSITPAKEDELPSDMKLLHELVEKTAQEHPQRIAFEFVSKESSGKRPVRKWTYRELDQEGNKIAQLLAAHNVKQNSLVGVCFDKCPEASFAMLGILKAGCAFVAIDPGAPAARQTFIIEDSDAQAVLSMSSQSAQFNAIAKVPVLNLDEVEWCSLSGQKLLQNSVIDPQDRSYCLYTSGTTGTPKGCELTHENAVQALLAFQRLFAGHWDVDSRWLQFASFHFDVSVLEQYWSWSVGICVVSAPRDLIFEDLAGSIRDLNITHIDLTPSLAQILHPDDVPSLCKGVFITGGESLKQEILDVWGPKGVIYNGYGPTEATIGCTMYPRVPANGKPSNIGPQFDNVGSLVLRPGSDVPVLRGGVGELCVSGKLVGKGYLNRPDLTTERFPYLNRFSQRVYRTGDVVRILHDGTFHFLGRADDQVKLRGQRLEVAEINSVIKQSDSDISDVATLVLKHPKQQKEQLVSFVVCGKALKAQPEVLLGEVGGIASAKQACNDKLPPYMLPTHFVPLTSMPLNVNNKADGKALKKMYESLSSTDLQKLSATSLSRDEQWSKQEEKLRDVMLEALGADHESMSKNTSFYELGMDSISVIGVTQSLKQSGFTKVTTSMILQCPTIRRLAKSLAANSAMSNVRGSILAAQQSINAVNHRHRRKIAKRLSVKPSMIESLAPCTPLQQGMIARSMENGNGLYFNTFRFRLNMDVDEGKLRHAWETMYNSTQILRTVFVNTEEGYLQAVLGGIPFNGFIQTSTQDDDLISHMAQLHKDWLSLNDVDFRQPFQVHLVSAQKQKQLIVHIFHGLYDGNSIGLLLQGVWNSYERRDSMPDAPSFHTALAHGPLRIPDDAKSFWKDLILARTSSLPTLFDNSSQDAVVIARTMRAPANFDLIRRQLNVTAQAVVQACWFSVLHRHVKGDVATGIIVSGRSIEFEGADRVIGPMFNTIPYHHRAQRSESWSSIIERVHDFNIQAHPFQHTPLRDIMKWCKRSPSNPLFDNLFVYQVPQDNQEWAKNDLWTLLDDEAIADYPLAFEVEHRGGTELKLTLVTQGHVANDQIAAKLLDMFEEALDQAINDPSAVLELPADVDGAVENNTAIRSKLDDNNDISDFEWSDNAIAIREEIANLTANEMESISETTSIFELGLDSIDAIKLSSKLKKRGMELSVSGIMRGLTIEKMAQNMSMKNTQTTEAAPHFDLDAHKTKLAKCLYHQGFSADDIEEILPLTPLQEAMVAEMIASEYTRYFNHDVLKLSPDTDISKFQKAWTTVVMGSPILRTGFVEVDNPDIDLSFAQIIHRQPHDFYSHMSFGSRPDFASIFKDLRNDAIQRPLSTPLFHLTFIDTPDQSYLVLSIAHALYDGWSLSLLHSDVHRAYQNEFEARPSYQPSLAEIIKTSGPDAAGFWQDYLSGANGNTFPRRTLEPDEKSSTVHRHQENSKIALELIQSFARKNNVSLQTVGQTVFALVTASFTRSLDVTFGSVLSGRDEEETSQLMFPTMNTVAIRTILHGKSIELLRYVQDNFANIKQWQHYPLRKAMSQARLDGRLFDSLFIYQKRLEQQQNEGERLYTSVGGHSDVEYAVCVEMEVVKEALIWRCAVKDDVFDLEETRQLLKRMDDVLIHLMERAEAPVIDMTAEGTSVCGLPAFEEAEMHTGSGHVESGEDDGQDTPSTETTNRIRKILAAVSKTPEEEMTNDMTIFHMGLDSISAIKVSSLLRKQGVVLSVGEMLQAGSVEKMAKLADARATEPSKDDAIDSASLGEILKELNEAEVFKRAGVDVDNVVQMLPVTAGQLYMLSMWLNTNGSNFYPEFSYEFEADVAFEDLKKAWQALVTTNPILRTCFVSVGNHQVSYVQLVLRDIDIAITNVTEYGEEEIRNCIRKATTQQPWARLLVSRNSHSWTLRLKIHHALYDGISLPLLMQQFEDLCNGSVLNASRNDILADFISSTSSLSSSPQRRQFWETHLLSRTAPTQLKQPSHTPTTRLEIFRPSLTPIQTLDTTARHHGISPHALFLAIYAKLHSRLPHSTTTDDNIVLGIYLANRSLSCTPELPGAAIPTLNLVPLRVSTPQSRSVVESAKQVQAHLRHLNDATLATTSLVEIERWTGVKIDVFVNFLVDIDDQGARPKHAHQRVKISPTLRQQYYCSSFSRTSSVVQPEFMDFQALRNEHVNGVYLHAIDIEATVREGYLDVGIFAPGDMISLEQGEQLMDGLKGEVEGL.

The interval 45–435 (HDANAIDFLE…QGLLECLGRV (391 aa)) is adenylation 1. The Carrier 1 domain maps to 544-617 (SPKDPIGHSV…DLIEVCRESK (74 aa)). At S578 the chain carries O-(pantetheine 4'-phosphoryl)serine. Positions 652 to 1059 (LPCTPLQEAM…VDADRHVSAI (408 aa)) are condensation 1. The adenylation 2 stretch occupies residues 1089-1482 (EKWAATDPHR…GRTDDQVKIR (394 aa)). The Carrier 2 domain maps to 1611–1688 (ELLSQWERDV…SLASLKKLQS (78 aa)). An O-(pantetheine 4'-phosphoryl)serine modification is found at S1648. The segment at 1731-2141 (ILPCTPLQEA…ALSADTDMFP (411 aa)) is condensation 2. The tract at residues 2166 to 2551 (FERTALLHPD…GRLDDQVKIR (386 aa)) is adenylation 3. Residues 2652 to 2725 (SKTESEVRNI…DLAEHLDQIS (74 aa)) form the Carrier 3 domain. Residue S2686 is modified to O-(pantetheine 4'-phosphoryl)serine. Positions 2763–3174 (RPCTPLQNGM…HSQIPLAKTD (412 aa)) are condensation 3. The tract at residues 3202 to 3603 (EKTAQEHPQR…GRADDQVKLR (402 aa)) is adenylation 4. The 78-residue stretch at 3728 to 3805 (EQWSKQEEKL…RLAKSLAANS (78 aa)) folds into the Carrier 4 domain. Position 3765 is an O-(pantetheine 4'-phosphoryl)serine (S3765). The condensation 4 stretch occupies residues 3846–4250 (LAPCTPLQQG…LDQAINDPSA (405 aa)). In terms of domain architecture, Carrier 5 spans 4281 to 4357 (FEWSDNAIAI…KMAQNMSMKN (77 aa)). S4318 is modified (O-(pantetheine 4'-phosphoryl)serine). The segment at 4391 to 4802 (EEILPLTPLQ…ERAEAPVIDM (412 aa)) is condensation 5. Positions 4821–4842 (HTGSGHVESGEDDGQDTPSTET) are disordered. Residues 4840–4913 (TETTNRIRKI…KMAKLADARA (74 aa)) form the Carrier 6 domain. At S4874 the chain carries O-(pantetheine 4'-phosphoryl)serine. The interval 4952-5257 (QMLPVTAGQL…VQAHLRHLND (306 aa)) is condensation 6.

It belongs to the NRP synthetase family.

The protein operates within siderophore biosynthesis. Nonribosomal peptide synthetase; part of the gene cluster that mediates the biosynthesis of hydroxamate-containing siderophores that play a critical role in virulence. Cochliobolus heterostrophus produces extracellular coprogen-type siderophores including coprogen, neocoprogen I and neocoprogen II, as well as the intracellular siderophore ferricrocin. The role of extracellular siderophores is to supply iron to the fungus during plant infection, and the intracellular ferricrocin is required for intracellular iron distribution and storage with a crucial role in ascus and ascospore development. SIDA2 catalyzes the conversion of L-ornithine to N(5)-hydroxyornithine, the first step in the biosynthesis of all hydroxamate-containing siderophores. The assembly of extracellular coprogen-type siderophores is then performed by the nonribosomal peptide synthetase (NRPS) NPS6 whereas the intracellular siderophore ferricrocin is assembled by NPS2. The protein is Nonribosomal peptide synthetase 2 of Cochliobolus heterostrophus (strain C4 / ATCC 48331 / race T) (Southern corn leaf blight fungus).